The primary structure comprises 274 residues: tRNA (cytosine(48)-C(5))-methyltransferase (274 aa).

S-adenosyl-L-methionine is bound by residues 91-97, Glu-115, Arg-120, Asp-142, Asp-163, Asn-169, and Arg-189; that span reads CAAPGGK. Cys-212 acts as the Nucleophile in catalysis.

It belongs to the class I-like SAM-binding methyltransferase superfamily. RsmB/NOP family.

Its subcellular location is the cytoplasm. It carries out the reaction cytidine(48) in tRNA precursor + S-adenosyl-L-methionine = 5-methylcytidine(48) in tRNA precursor + S-adenosyl-L-homocysteine + H(+). The enzyme catalyses cytidine(40) in tRNA precursor + S-adenosyl-L-methionine = 5-methylcytidine(40) in tRNA precursor + S-adenosyl-L-homocysteine + H(+). Functionally, catalyzes AdoMet-dependent formation of m5C in tRNA. Cytidine residue at either position 40 or position 48 is likely to be methylated. This Methanocaldococcus jannaschii (strain ATCC 43067 / DSM 2661 / JAL-1 / JCM 10045 / NBRC 100440) (Methanococcus jannaschii) protein is tRNA (cytosine(48)-C(5))-methyltransferase (trm4).